Reading from the N-terminus, the 237-residue chain is MDSGGWIVYCCIFFILLGKVLEYTSSYQDKWFTKLTLTPEARKLNSQYHELLSERLRLQEENHSISAQDNYARWTKNNRKLGELDKKLGTIRDKLQETNTSSKKVFGRVKLIGLTIPFWILKIWQRSHVVYHFPKQDLFPKLVTGVWARGWLYLALGPLQYLRNGSLNIQDYAPHGVSLGIWIWALQATINTLEFLVKQVILEKPVSPPPQKSKSATKAETKRPEKLEITDDKVELD.

Topologically, residues 1-4 (MDSG) are lumenal. Residues 5–24 (GWIVYCCIFFILLGKVLEYT) traverse the membrane as a helical segment. Over 25–110 (SSYQDKWFTK…SSKKVFGRVK (86 aa)) the chain is Cytoplasmic. Positions 40 to 99 (EARKLNSQYHELLSERLRLQEENHSISAQDNYARWTKNNRKLGELDKKLGTIRDKLQETN) form a coiled coil. Residues 111–131 (LIGLTIPFWILKIWQRSHVVY) form a helical membrane-spanning segment. The Lumenal portion of the chain corresponds to 132–176 (HFPKQDLFPKLVTGVWARGWLYLALGPLQYLRNGSLNIQDYAPHG). The helical transmembrane segment at 177-193 (VSLGIWIWALQATINTL) threads the bilayer. Residues 194–237 (EFLVKQVILEKPVSPPPQKSKSATKAETKRPEKLEITDDKVELD) are Cytoplasmic-facing. Residues 205–237 (PVSPPPQKSKSATKAETKRPEKLEITDDKVELD) are disordered. A compositionally biased stretch (basic and acidic residues) spans 217 to 237 (TKAETKRPEKLEITDDKVELD).

Belongs to the WRB/GET1 family. As to quaternary structure, component of the Golgi to ER traffic (GET) complex, which is composed of GET1, GET2 and GET3. Within the complex, GET1 and GET2 form a heterotetramer which is stabilized by phosphatidylinositol binding and which binds to the GET3 homodimer.

It is found in the endoplasmic reticulum membrane. The protein localises to the golgi apparatus membrane. Required for the post-translational delivery of tail-anchored (TA) proteins to the endoplasmic reticulum. Together with GET2, acts as a membrane receptor for soluble GET3, which recognizes and selectively binds the transmembrane domain of TA proteins in the cytosol. The GET complex cooperates with the HDEL receptor ERD2 to mediate the ATP-dependent retrieval of resident ER proteins that contain a C-terminal H-D-E-L retention signal from the Golgi to the ER. The chain is Golgi to ER traffic protein 1 from Zygosaccharomyces rouxii (strain ATCC 2623 / CBS 732 / NBRC 1130 / NCYC 568 / NRRL Y-229).